We begin with the raw amino-acid sequence, 308 residues long: Exosporium protein A (308 aa).

Its subcellular location is the spore wall. This Clostridium sporogenes (strain ATCC 15579) protein is Exosporium protein A.